The sequence spans 603 residues: NADH-ubiquinone oxidoreductase chain 5 (603 aa).

Transmembrane regions (helical) follow at residues 4-24 (LPTL…LSPL), 38-58 (MAVS…MHSG), 87-107 (LIFM…SLWY), 117-137 (FFKY…ANNL), 140-160 (LFIG…WWYG), 171-191 (AMIY…WFLL), 211-233 (LPLT…HPWL), 241-261 (TPVS…FLLI), 273-293 (ILTL…ICAL), 301-320 (IIAF…IGIN), 331-351 (THAF…HSLG), 366-386 (LPFT…MPFL), 409-429 (LLIT…IIFF), 457-477 (LMLG…PTTV), 488-508 (FMAL…SSFT), and 583-603 (MIKL…LLII).

The protein belongs to the complex I subunit 5 family.

It is found in the mitochondrion inner membrane. It catalyses the reaction a ubiquinone + NADH + 5 H(+)(in) = a ubiquinol + NAD(+) + 4 H(+)(out). Core subunit of the mitochondrial membrane respiratory chain NADH dehydrogenase (Complex I) that is believed to belong to the minimal assembly required for catalysis. Complex I functions in the transfer of electrons from NADH to the respiratory chain. The immediate electron acceptor for the enzyme is believed to be ubiquinone. The protein is NADH-ubiquinone oxidoreductase chain 5 (MT-ND5) of Dugong dugon (Dugong).